Consider the following 511-residue polypeptide: Intermediate cleaving peptidase 55 (511 aa).

Mn(2+) is bound by residues Asp-327, Asp-338, His-417, Glu-444, and Glu-467.

It belongs to the peptidase M24B family. It depends on Mn(2+) as a cofactor.

The protein resides in the nucleus. It localises to the mitochondrion inner membrane. The enzyme catalyses The enzyme cleaves the 36-Pro-Pro-37 bond of cysteine desulfurase (EC 2.8.1.7) removing three amino acid residues (Tyr-Ser-Pro) from the N-terminus after cleavage by mitochondrial processing peptidase.. Aminopeptidase which cleaves preprotein intermediates that carry destabilizing N-ter amino acid residues after the mitochondrial processing peptidase (MPP) cleavage site and is thus critical for stabilization of the mitochondrial proteome. The sequence is that of Intermediate cleaving peptidase 55 (ICP55) from Saccharomyces cerevisiae (strain ATCC 204508 / S288c) (Baker's yeast).